The sequence spans 218 residues: Peroxiredoxin-like 2A (218 aa).

A thioredoxin-like fold region spans residues 3–101; the sequence is MWSIGVGAVG…DELGVPLYAV (99 aa). Catalysis depends on redox-active residues Cys-74 and Cys-77.

The protein belongs to the peroxiredoxin-like PRXL2 family. PRXL2A subfamily. In terms of tissue distribution, expressed in kidney, liver, skin, and brain. Widely expressed with highest levels detected in adipose tissue.

It is found in the cytoplasm. The protein resides in the secreted. Involved in redox regulation of the cell. Acts as an antioxidant. Inhibits TNFSF11-induced NFKB1 and JUN activation and osteoclast differentiation. May affect bone resorption and help to maintain bone mass. Acts as a negative regulator of macrophage-mediated inflammation by inhibiting macrophage production of inflammatory cytokines, probably through suppression of the MAPK signaling pathway. This is Peroxiredoxin-like 2A (Prxl2a) from Mus musculus (Mouse).